Here is a 405-residue protein sequence, read N- to C-terminus: Argininosuccinate synthase (405 aa).

Residues 10-18 (AYSGGLDTS) and alanine 37 contribute to the ATP site. L-citrulline-binding residues include tyrosine 88 and serine 93. Residue glycine 118 coordinates ATP. L-aspartate contacts are provided by threonine 120, asparagine 124, and aspartate 125. Asparagine 124 serves as a coordination point for L-citrulline. The L-citrulline site is built by arginine 128, serine 179, serine 188, glutamate 264, and tyrosine 276.

It belongs to the argininosuccinate synthase family. Type 1 subfamily. As to quaternary structure, homotetramer.

The protein resides in the cytoplasm. The enzyme catalyses L-citrulline + L-aspartate + ATP = 2-(N(omega)-L-arginino)succinate + AMP + diphosphate + H(+). Its pathway is amino-acid biosynthesis; L-arginine biosynthesis; L-arginine from L-ornithine and carbamoyl phosphate: step 2/3. The chain is Argininosuccinate synthase from Pseudomonas fluorescens (strain ATCC BAA-477 / NRRL B-23932 / Pf-5).